The primary structure comprises 232 residues: dTTP/UTP pyrophosphatase (232 aa).

The active-site Proton acceptor is the Asp-103.

Belongs to the Maf family. YhdE subfamily. Requires a divalent metal cation as cofactor.

The protein localises to the cytoplasm. The enzyme catalyses dTTP + H2O = dTMP + diphosphate + H(+). The catalysed reaction is UTP + H2O = UMP + diphosphate + H(+). It carries out the reaction 5-methyl-UTP + H2O = 5-methyl-UMP + diphosphate + H(+). It catalyses the reaction psi-UTP + H2O = psi-UMP + diphosphate + H(+). Nucleoside triphosphate pyrophosphatase that hydrolyzes dTTP and UTP. Can also hydrolyze the modified nucleotides 5-methyl-UTP (m(5)UTP) and pseudo-UTP. Has weak activity with CTP. May have a dual role in cell division arrest and in preventing the incorporation of modified nucleotides into cellular nucleic acids. This chain is dTTP/UTP pyrophosphatase, found in Saccharomyces cerevisiae (strain ATCC 204508 / S288c) (Baker's yeast).